Consider the following 156-residue polypeptide: Endogenous retrovirus group K member 10 Pro protein (156 aa).

The region spanning 21–96 (FEGLVDTGAD…IPLNLWGRDL (76 aa)) is the Peptidase A2 domain. Asp26 is an active-site residue. The G-patch domain occupies 111–156 (YSPTSQKIMTKMGYIPGKGLGKNEDGIKVPVEAKINQEREGIGYPF).

It belongs to the peptidase A2 family. HERV class-II K(HML-2) subfamily. Active as a homodimer. Autoproteolytically processed at the N-terminus. Expected C-terminal autoprocessing not detected. The sequence shown is that of the processed Pro protein.

The enzyme catalyses Processing at the authentic HIV-1 PR recognition site and release of the mature p17 matrix and the p24 capsid protein, as a result of the cleavage of the -SQNY-|-PIVQ- cleavage site.. Its activity is regulated as follows. Resistant to a number of clinically useful HIV-1 PR inhibitors. Inhibited by cyclic urea SD146. Functionally, retroviral proteases have roles in processing of the primary translation products and the maturation of the viral particle. Endogenous Pro proteins may have kept, lost or modified their original function during evolution. This endogenous protein has retained most of the characteristics of retroviral proteases. In Homo sapiens (Human), this protein is Endogenous retrovirus group K member 10 Pro protein (ERVK-10).